We begin with the raw amino-acid sequence, 118 residues long: LYR motif containing protein 1 (118 aa).

Positions Thr91 to Thr118 are disordered. A compositionally biased stretch (basic residues) spans Lys93 to Ala107.

Belongs to the complex I LYR family.

This Danio rerio (Zebrafish) protein is LYR motif containing protein 1 (lyrm1).